The following is a 195-amino-acid chain: Interferon omega-1 (195 aa).

The signal sequence occupies residues 1–23; it reads MAFVLSLLMALVLVSYGPGGSLG. Intrachain disulfides connect C24-C122 and C52-C162.

Belongs to the alpha/beta interferon family.

The protein resides in the secreted. In Bos taurus (Bovine), this protein is Interferon omega-1 (IFNW1).